We begin with the raw amino-acid sequence, 143 residues long: MFDFDATLPLMALQFLVLAVVLNAVFYKPLGKALDSRADYIRSNENQAREQLAKAQNLAQEYEKQLGDARRQSNEIIAAAQAQAKQIADEKIAQAQKEAQAQKEAAAKEIEQQKQEAMTALEQQVDALSRQILEKILGSELVK.

The helical transmembrane segment at 6–26 (ATLPLMALQFLVLAVVLNAVF) threads the bilayer.

Belongs to the ATPase B chain family. F-type ATPases have 2 components, F(1) - the catalytic core - and F(0) - the membrane proton channel. F(1) has five subunits: alpha(3), beta(3), gamma(1), delta(1), epsilon(1). F(0) has four main subunits: a(1), b(1), b'(1) and c(10-14). The alpha and beta chains form an alternating ring which encloses part of the gamma chain. F(1) is attached to F(0) by a central stalk formed by the gamma and epsilon chains, while a peripheral stalk is formed by the delta, b and b' chains.

Its subcellular location is the cellular thylakoid membrane. In terms of biological role, f(1)F(0) ATP synthase produces ATP from ADP in the presence of a proton or sodium gradient. F-type ATPases consist of two structural domains, F(1) containing the extramembraneous catalytic core and F(0) containing the membrane proton channel, linked together by a central stalk and a peripheral stalk. During catalysis, ATP synthesis in the catalytic domain of F(1) is coupled via a rotary mechanism of the central stalk subunits to proton translocation. Component of the F(0) channel, it forms part of the peripheral stalk, linking F(1) to F(0). The b'-subunit is a diverged and duplicated form of b found in plants and photosynthetic bacteria. This chain is ATP synthase subunit b', found in Gloeothece citriformis (strain PCC 7424) (Cyanothece sp. (strain PCC 7424)).